We begin with the raw amino-acid sequence, 368 residues long: Alanine racemase (368 aa).

Lysine 40 functions as the Proton acceptor; specific for D-alanine in the catalytic mechanism. Residue lysine 40 is modified to N6-(pyridoxal phosphate)lysine. Position 136 (arginine 136) interacts with substrate. Tyrosine 263 acts as the Proton acceptor; specific for L-alanine in catalysis. A substrate-binding site is contributed by methionine 310.

This sequence belongs to the alanine racemase family. Pyridoxal 5'-phosphate is required as a cofactor.

The enzyme catalyses L-alanine = D-alanine. It participates in amino-acid biosynthesis; D-alanine biosynthesis; D-alanine from L-alanine: step 1/1. Its function is as follows. Catalyzes the interconversion of L-alanine and D-alanine. May also act on other amino acids. The sequence is that of Alanine racemase (alr) from Streptococcus gordonii (strain Challis / ATCC 35105 / BCRC 15272 / CH1 / DL1 / V288).